Reading from the N-terminus, the 57-residue chain is Large ribosomal subunit protein bL32 (57 aa).

It belongs to the bacterial ribosomal protein bL32 family.

This is Large ribosomal subunit protein bL32 from Shouchella clausii (strain KSM-K16) (Alkalihalobacillus clausii).